Reading from the N-terminus, the 369-residue chain is 3,7-dimethylxanthine N-methyltransferase TCS1 (369 aa).

Y24 is an S-adenosyl-L-homocysteine binding site. Caffeine is bound at residue T31. Residues C66, N71, D103, L104, S138, and F139 each coordinate S-adenosyl-L-homocysteine. Caffeine-binding residues include Y156, H159, and W160. N177 provides a ligand contact to Mg(2+). Position 225 (R225) interacts with caffeine. Mg(2+)-binding residues include D263, F265, and N266. Position 321 (F321) interacts with caffeine.

Belongs to the methyltransferase superfamily. Type-7 methyltransferase family. Requires Mg(2+) as cofactor. As to expression, expressed in young leaves and flowers.

It catalyses the reaction 7-methylxanthine + S-adenosyl-L-methionine = theobromine + S-adenosyl-L-homocysteine + H(+). The enzyme catalyses theobromine + S-adenosyl-L-methionine = caffeine + S-adenosyl-L-homocysteine + H(+). The catalysed reaction is 1,7-dimethylxanthine + S-adenosyl-L-methionine = caffeine + S-adenosyl-L-homocysteine + H(+). The protein operates within alkaloid biosynthesis. Its function is as follows. Involved in the biosynthesis of caffeine. Catalyzes the conversion of 7-methylxanthine (7mX) to theobromine and of theobromine to caffeine. Has 3-N- and 1-N-methylation activity. This chain is 3,7-dimethylxanthine N-methyltransferase TCS1, found in Camellia sinensis (Tea plant).